Here is a 680-residue protein sequence, read N- to C-terminus: DNA-directed RNA polymerase subunit beta' (680 aa).

Zn(2+) contacts are provided by Cys-69, Cys-71, Cys-87, and Cys-90. Asp-489, Asp-491, and Asp-493 together coordinate Mg(2+).

The protein belongs to the RNA polymerase beta' chain family. RpoC1 subfamily. In terms of assembly, in plastids the minimal PEP RNA polymerase catalytic core is composed of four subunits: alpha, beta, beta', and beta''. When a (nuclear-encoded) sigma factor is associated with the core the holoenzyme is formed, which can initiate transcription. It depends on Mg(2+) as a cofactor. Requires Zn(2+) as cofactor.

It localises to the plastid. Its subcellular location is the chloroplast. It catalyses the reaction RNA(n) + a ribonucleoside 5'-triphosphate = RNA(n+1) + diphosphate. In terms of biological role, DNA-dependent RNA polymerase catalyzes the transcription of DNA into RNA using the four ribonucleoside triphosphates as substrates. The chain is DNA-directed RNA polymerase subunit beta' from Draba nemorosa (Woodland whitlowgrass).